The following is a 286-amino-acid chain: MRYIRLCIISLLATLPLAVHASPQPLEQIKLSESQLSGRVGMIEMDLASGRTLTAWRADERFPMMSTFKVVLCGAVLARVDAGDEQLERKIHYRQQDLVDYSPVSEKHLADGMTVGELCAAAITMSDNSAANLLLATVGGPAGLTAFLRQIGDNVTRLDRWETELNEALPGDARDTTTPASMAATLRKLLTSQRLSARSQLQLLQWMVDDRVAGPLIRSVLPAGWFIADKTGASERGARGIVALLGPNNKAERIVVIYLRDTPASMAERNQQIAGIGAALIEHWQR.

The first 21 residues, 1–21, serve as a signal peptide directing secretion; the sequence is MRYIRLCIISLLATLPLAVHA. The active-site Acyl-ester intermediate is serine 66. Cysteines 73 and 119 form a disulfide. The active-site Proton acceptor is glutamate 164. 230 to 232 provides a ligand contact to substrate; sequence KTG.

Belongs to the class-A beta-lactamase family.

The catalysed reaction is a beta-lactam + H2O = a substituted beta-amino acid. Its function is as follows. This enzyme hydrolyzes cefotaxime, ceftazidime and other broad spectrum cephalosporins. This Klebsiella pneumoniae protein is Beta-lactamase SHV-3 (bla).